The sequence spans 190 residues: Protein GrpE (190 aa).

The span at 1-18 shows a compositional bias: polar residues; that stretch reads MTETPNTSSEEIQTSEPS. A disordered region spans residues 1-21; it reads MTETPNTSSEEIQTSEPSPDN.

The protein belongs to the GrpE family. Homodimer.

The protein resides in the cytoplasm. Its function is as follows. Participates actively in the response to hyperosmotic and heat shock by preventing the aggregation of stress-denatured proteins, in association with DnaK and GrpE. It is the nucleotide exchange factor for DnaK and may function as a thermosensor. Unfolded proteins bind initially to DnaJ; upon interaction with the DnaJ-bound protein, DnaK hydrolyzes its bound ATP, resulting in the formation of a stable complex. GrpE releases ADP from DnaK; ATP binding to DnaK triggers the release of the substrate protein, thus completing the reaction cycle. Several rounds of ATP-dependent interactions between DnaJ, DnaK and GrpE are required for fully efficient folding. The sequence is that of Protein GrpE from Chlamydia trachomatis serovar L2b (strain UCH-1/proctitis).